The sequence spans 107 residues: Rhodocoxin (107 aa).

One can recognise a 2Fe-2S ferredoxin-type domain in the interval 2-106; sequence PTVTYVHPDG…GLIVRLPEEQ (105 aa). [2Fe-2S] cluster contacts are provided by cysteine 40, cysteine 46, cysteine 49, and cysteine 87.

The protein belongs to the adrenodoxin/putidaredoxin family. It depends on [2Fe-2S] cluster as a cofactor.

Its function is as follows. Ferredoxin-type protein which transfers electrons from rhodocoxin reductase to cytochrome CYP116 (ThcB), which is involved in the degradation of thiocarbamate herbicides. In Rhodococcus erythropolis (Arthrobacter picolinophilus), this protein is Rhodocoxin (thcC).